A 717-amino-acid chain; its full sequence is MASHANASGGGGDEEMVEASTLRHRHGAGKDANGVGTERQLAAAAAEGEEEGPSSVERAFVDRAVPSWREQLTVRAFVVSFFLSIMFSIIVMKLNLTTGIIPSLNVSAGLLGFFFVRLWTAAIERVGLLRQPFTRQENTVIQTCVVAAYGIAFSGGFGTYLFGMSETIAKQATEANNAQNVKNPHIGWMIGFLFLVSFIGLLALVPLRKIMIVDYKLTYPSGTATAYLINGFHTPEGAKLAKKQVKELGKFFLFSFVWGFFQWFYTAGDGCGFQSFPTLGLQAYKNRFYFDFSPTYVGVGMICPHIVNVSVLLGGILSWGIMWPLIRNKKGSWYAASLSETSLHGLQGYRVFISIALILGDGLYNFVKVLIRTTAGFVVMMKKNSTLPVSNNGSPMVATEAISFDDERRTELFLKDQIPKTVAFGGYVAVAAVSIGTLPQIFPQLKWYYILVAYVFAPVLAFCNAYGAGLTDWSLASTYGKLAIFIFGAWAGASNGGVLVGLAACGVMMSIVSTASDLMQDFKTGYLTLASPRSMFVSQVIGTAMGCVIAPCVFWLFYKAFADIGVSGTEYPAPYAIVYRNMAILGVDGFSSLPKHCLTLCYIFFAAAIAINLARDLAPSKVARFIPLPMAMAIPFYIGSYFAIDMFIGTVILFVWEMVNKAKAEAFAPAVASGLICGDGIWTLPQSILALAKVKPPICMKFLSRSVNAQVDGFLGN.

Residues 1–56 (MASHANASGGGGDEEMVEASTLRHRHGAGKDANGVGTERQLAAAAAEGEEEGPSSV) form a disordered region. Helical transmembrane passes span 76–96 (AFVV…KLNL), 99–119 (GIIP…VRLW), 144–164 (CVVA…LFGM), 186–206 (IGWM…ALVP), 248–268 (LGKF…YTAG), 306–326 (IVNV…WPLI), 351–371 (VFIS…KVLI), 422–442 (VAFG…PQIF), 450–470 (ILVA…GAGL), 482–502 (LAIF…LVGL), 536–556 (FVSQ…VFWL), 593–613 (LPKH…AINL), 636–656 (FYIG…LFVW), and 671–691 (VASG…ILAL).

This sequence belongs to the YSL (TC 2.A.67.2) family. Expressed in root cortex and stele.

It localises to the membrane. In terms of biological role, may be involved in the transport of nicotianamine-chelated metals. This is Probable metal-nicotianamine transporter YSL12 (YSL12) from Oryza sativa subsp. japonica (Rice).